The sequence spans 193 residues: MPNWGGGKKCGVCQKTVYFAEEVQCEGNSFHKSCFLCMVCKKNLDSTTVAVHGEEIYCKSCYGKKYGPKGYGYGQGAGTLSTDKGESLGIKHEESPGHRPTTNPNASKFAQKIGGSERCPRCSQAVYAAEKVIGAGKSWHKACFRCAKCGKGLESTTLADKDGEIYCKGCYAKNFGPKGFGFGQGAGALVHSE.

The LIM zinc-binding 1 domain occupies 10-61 (CGVCQKTVYFAEEVQCEGNSFHKSCFLCMVCKKNLDSTTVAVHGEEIYCKSC). Positions 64 to 69 (KKYGPK) match the Nuclear localization signal motif. Residue serine 81 is modified to Phosphoserine. Lysine 84 carries the N6-acetyllysine modification. Lysine 91 is covalently cross-linked (Glycyl lysine isopeptide (Lys-Gly) (interchain with G-Cter in SUMO2)). An N6-acetyllysine mark is found at lysine 112, lysine 131, lysine 137, and lysine 161. Positions 119 to 170 (CPRCSQAVYAAEKVIGAGKSWHKACFRCAKCGKGLESTTLADKDGEIYCKGC) constitute an LIM zinc-binding 2 domain. Position 192 is a phosphoserine (serine 192).

Interacts with ASCC1; ASCC2 and TRIP4.

It is found in the nucleus. Functionally, could play a role in neuronal development. The chain is Cysteine and glycine-rich protein 1 (CSRP1) from Pongo abelii (Sumatran orangutan).